Consider the following 136-residue polypeptide: Large ribosomal subunit protein uL16 (136 aa).

The protein belongs to the universal ribosomal protein uL16 family. As to quaternary structure, part of the 50S ribosomal subunit.

Functionally, binds 23S rRNA and is also seen to make contacts with the A and possibly P site tRNAs. The protein is Large ribosomal subunit protein uL16 of Shewanella sediminis (strain HAW-EB3).